A 1132-amino-acid polypeptide reads, in one-letter code: APC membrane recruitment protein 1 (1132 aa).

The residue at position 1 (Met-1) is an N-acetylmethionine. Residues 1–21 (MESQQDEAVQTKGASTSSDAQ) show a composition bias toward polar residues. 8 disordered regions span residues 1–256 (MESQ…ACKN), 268–301 (FMQPKPVLEGGSLEEPHTSETEGKVVAGEVNPPN), 338–423 (SMTD…GEEN), 469–505 (GLGELLTPQSDQQESAPNSDEGYYDSTTPGFEDDSGE), 674–699 (TSGGSQTSHRGTTSAFPATSSSEPDW), 736–770 (MQEANFGGSPRKAYPSYSPPEEPEEEEEEKEGNAT), 924–949 (ELQAHQEDSDEEGEEEEGEWGRDSPL), and 1038–1132 (SQAS…NLAK). Residues 24 to 35 (GAEKGAKNKTTE) are compositionally biased toward basic and acidic residues. A compositionally biased stretch (low complexity) spans 121–133 (SKSSAQFPSSQSA). 3 stretches are compositionally biased toward basic and acidic residues: residues 195-208 (KELEGARTRSHEHV), 218-229 (EIFRDTRKENAK), and 281-290 (EEPHTSETEG). Over residues 372 to 423 (ALPDDDDNDDEEEEEEEEEEEEEEEEEEEEEEEEEEEELLEDEEEVKDGEEN) the composition is skewed to acidic residues. Composition is skewed to polar residues over residues 475 to 486 (TPQSDQQESAPN) and 677 to 696 (GSQTSHRGTTSAFPATSSSE). Acidic residues-rich tracts occupy residues 756 to 765 (EEPEEEEEEK) and 931 to 941 (DSDEEGEEEEG). 2 stretches are compositionally biased toward polar residues: residues 1059–1072 (SCSSISGANSQSQA) and 1115–1132 (ASLSTSYSSTAMNGNLAK).

It belongs to the Amer family. Interacts with CTNNB1, AXIN1, LRP6, KEAP1, APC and BTRC. Interacts with SCF (SKP1-CUL1-F-box protein) E3 ubiquitin-protein ligase complexes containing BTRC and/or FBXW11. Identified in the beta-catenin destruction complex containing CTNNB1, APC, AXIN1 and AXIN2. Interacts with WT1. As to expression, expressed in kidney.

The protein localises to the cytoplasm. It is found in the cell membrane. Its subcellular location is the nucleus. Its function is as follows. Regulator of the canonical Wnt signaling pathway. Acts by specifically binding phosphatidylinositol 4,5-bisphosphate (PtdIns(4,5)P2), translocating to the cell membrane and interacting with key regulators of the canonical Wnt signaling pathway, such as components of the beta-catenin destruction complex. Acts both as a positive and negative regulator of the Wnt signaling pathway, depending on the context: acts as a positive regulator by promoting LRP6 phosphorylation. Also acts as a negative regulator by acting as a scaffold protein for the beta-catenin destruction complex and promoting stabilization of Axin at the cell membrane. Promotes CTNNB1 ubiquitination and degradation. Involved in kidney development. This Mus musculus (Mouse) protein is APC membrane recruitment protein 1 (Amer1).